Here is a 1059-residue protein sequence, read N- to C-terminus: Nonsense-mediated mRNA decay factor SMG7 (1059 aa).

2 TPR repeats span residues 149 to 183 (DQQSQNLSDKDGKELAEVQKALKSCHRCLIYLGDL) and 184 to 217 (ARYKGMYAEGDSRSRQYASASSYYLQAASLWPAS). Polar residues predominate over residues 806 to 817 (SHVSPAHSQSTS). 4 disordered regions span residues 806–826 (SHVSPAHSQSTSFGGGSKWSP), 927–955 (HLGPPPGFNSVPAKLQKEPAPGSELSGNN), 987–1015 (SGKPEHLGSTGNGLNGPANFPFPGKQVPT), and 1040–1059 (STQLPEQYQGQSTWSSRHFV).

In terms of assembly, interacts with EXA1. Expressed in flowers and at lower levels in stems and leaves.

The protein resides in the cytoplasm. It is found in the P-body. Functionally, plays multiple roles in growth and development. Involved in nonsense-mediated mRNA decay (NMD). May provide a link to the mRNA degradation machinery to initiate NMD and serve as an adapter for UPF proteins function. Required for meiotic progression through anaphase II of pollen mother cells. May counteract cyclin-dependent kinase (CDK) activity at the end of meiosis. May play a role in plant defense through its involvement in NMD. Together with EXA1, helps to restrict cell death induction during pathogen infection in a salicylic acid- (SA) and reactive oxygen species- (ROS) independent manner. This Arabidopsis thaliana (Mouse-ear cress) protein is Nonsense-mediated mRNA decay factor SMG7.